We begin with the raw amino-acid sequence, 190 residues long: Ribonuclease HII (190 aa).

In terms of domain architecture, RNase H type-2 spans 3-190 (KLIAGVDEVG…KPVKALLEEK (188 aa)). The a divalent metal cation site is built by Asp-9, Glu-10, and Asp-101.

This sequence belongs to the RNase HII family. Mn(2+) is required as a cofactor. Mg(2+) serves as cofactor.

The protein localises to the cytoplasm. It catalyses the reaction Endonucleolytic cleavage to 5'-phosphomonoester.. Its function is as follows. Endonuclease that specifically degrades the RNA of RNA-DNA hybrids. This Alteromonas mediterranea (strain DSM 17117 / CIP 110805 / LMG 28347 / Deep ecotype) protein is Ribonuclease HII.